We begin with the raw amino-acid sequence, 120 residues long: Ribosome-binding factor A (120 aa).

The protein belongs to the RbfA family. As to quaternary structure, monomer. Binds 30S ribosomal subunits, but not 50S ribosomal subunits or 70S ribosomes.

Its subcellular location is the cytoplasm. Functionally, one of several proteins that assist in the late maturation steps of the functional core of the 30S ribosomal subunit. Associates with free 30S ribosomal subunits (but not with 30S subunits that are part of 70S ribosomes or polysomes). Required for efficient processing of 16S rRNA. May interact with the 5'-terminal helix region of 16S rRNA. This chain is Ribosome-binding factor A, found in Desulforamulus reducens (strain ATCC BAA-1160 / DSM 100696 / MI-1) (Desulfotomaculum reducens).